A 241-amino-acid polypeptide reads, in one-letter code: GTP cyclohydrolase III (241 aa).

This sequence belongs to the archaeal-type GTP cyclohydrolase family.

It carries out the reaction GTP + 3 H2O = 2-amino-5-formylamino-6-(5-phospho-D-ribosylamino)pyrimidin-4(3H)-one + 2 phosphate + 2 H(+). In terms of biological role, catalyzes the formation of 2-amino-5-formylamino-6-ribofuranosylamino-4(3H)-pyrimidinone ribonucleotide monophosphate and inorganic phosphate from GTP. Also has an independent pyrophosphate phosphohydrolase activity. The polypeptide is GTP cyclohydrolase III (Aeropyrum pernix (strain ATCC 700893 / DSM 11879 / JCM 9820 / NBRC 100138 / K1)).